The sequence spans 224 residues: dTTP/UTP pyrophosphatase (224 aa).

Aspartate 77 serves as the catalytic Proton acceptor.

It belongs to the Maf family. YhdE subfamily. It depends on a divalent metal cation as a cofactor.

The protein resides in the cytoplasm. It carries out the reaction dTTP + H2O = dTMP + diphosphate + H(+). It catalyses the reaction UTP + H2O = UMP + diphosphate + H(+). Nucleoside triphosphate pyrophosphatase that hydrolyzes dTTP and UTP. May have a dual role in cell division arrest and in preventing the incorporation of modified nucleotides into cellular nucleic acids. This chain is dTTP/UTP pyrophosphatase, found in Dehalococcoides mccartyi (strain CBDB1).